Here is a 378-residue protein sequence, read N- to C-terminus: MASETEKLLCLNTESAEIPADFVELLPPDNIGDIEAVSLETSVGQTIEVYGDVGVDWAHGSQYHSPVIALQPLVGSSLSSRDHDKEMFVVQTREEEVVGYQDSDNLLFSPEFGSQMVLPVNEDDYLQPTTASFTGFLAAENGQGELSPYEGNLCGLTTFIEAGAEESVNADLGDKQWEQKQIDGLDGEFPFTMWDDVNEKEDPIAEEQAGESPPDYSEYMTGKKFPPEGIPGIDLSDPKQLAEFTSMRPKKPKGDFPRPIACSHKGCEKMFKDNSAMRKHLHIHGPRVHVCAECGKAFVESSKLKRHQLVHTGEKPYQCTFEGCGRRFSLDFNLRTHVRIHTGDKPFVCPFDACNKKFAQSTNLKSHILTHVKNKNDQ.

The tract at residues 39–113 (LETSVGQTIE…DNLLFSPEFG (75 aa)) is mediates transcriptional activation. The segment at 243-378 (EFTSMRPKKP…LTHVKNKNDQ (136 aa)) is mediates transcriptional repression. C2H2-type zinc fingers lie at residues 260-284 (IACS…LHIH), 289-311 (HVCA…QLVH), 317-341 (YQCT…VRIH), and 347-371 (FVCP…ILTH).

It belongs to the YY transcription factor family. Weakly expressed by neuronal and glial cells in the cerebral cortex. Expressed by Purkinje cells and in the granular layers of the cerebellum. Expressed in all layers of spermatocytes in testis but not detected in sperm cells.

The protein localises to the nucleus. In terms of biological role, functions as a multifunctional transcription factor that may exhibit positive and negative control on a large number of genes. May antagonize YY1 and function in development and differentiation. The protein is Transcription factor YY2 (Yy2) of Mus musculus (Mouse).